We begin with the raw amino-acid sequence, 520 residues long: Legumin A2 (520 aa).

A signal peptide spans 1–22 (MATKLLALSLSFCFLLLGGCFA). Disulfide bonds link Cys32-Cys65 and Cys108-Cys342. The Cupin type-1 1 domain occupies 37–233 (LNALEPDNRI…AFNVNRHIVD (197 aa)). Residues 250–339 (VKGGLSIISP…RRQGDNGLEE (90 aa)) are disordered. Residues 348–497 (LNIGPSSSPD…TFNLQRNEAR (150 aa)) form the Cupin type-1 2 domain.

The protein belongs to the 11S seed storage protein (globulins) family. As to quaternary structure, hexamer; each subunit is composed of an acidic and a basic chain derived from a single precursor and linked by a disulfide bond.

Its function is as follows. This protein found in the seeds of many leguminous and non-leguminous plants is the source of sulfur-containing amino acids in seed meals. The chain is Legumin A2 (LEGA2) from Pisum sativum (Garden pea).